The following is a 283-amino-acid chain: (+)-borneol dehydrogenase 2 (283 aa).

NAD(+) contacts are provided by residues 27–33, D51, 76–77, and 103–105; these read GGSSGIG, DV, and NAG. Residue S157 is the Proton donor of the active site. Residues Y170, K174, and T205 each coordinate NAD(+). Y170 acts as the Proton acceptor in catalysis. K174 functions as the Proton donor/acceptor in the catalytic mechanism.

This sequence belongs to the short-chain dehydrogenases/reductases (SDR) family.

It catalyses the reaction (1R,2S,4R)-borneol + NAD(+) = (1R,4R)-camphor + NADH + H(+). Functionally, involved in the biosynthesis of monoterpene natural products related to camphor. Catalayzes the oxidation of (+)-borneol to (+)-camphor. Shows absolute selectivity towards (+)-borneol. Catalyzes the oxidation of (+)-isoborneol to (-)-camphor. Shows absolute selectivity towards (+)-isoborneol. The polypeptide is (+)-borneol dehydrogenase 2 (Salvia officinalis (Sage)).